The chain runs to 983 residues: Polyhomeotic-like protein 3 (983 aa).

Disordered regions lie at residues Met-1–Pro-34, Leu-103–Ser-149, Val-225–Thr-283, Leu-313–Gln-332, Leu-339–Pro-410, Pro-477–Pro-509, and Asp-601–Ile-620. Composition is skewed to low complexity over residues Thr-9–Ser-29 and Leu-103–Ser-126. Over residues Ile-127–Ile-139 the composition is skewed to polar residues. The segment covering Ser-140–Ser-149 has biased composition (low complexity). The segment covering Val-225 to Ile-257 has biased composition (polar residues). The span at Ser-258–Glu-271 shows a compositional bias: basic and acidic residues. Phosphoserine occurs at positions 263 and 272. Residues Ser-274–Thr-283 are compositionally biased toward polar residues. Position 315 is a phosphoserine (Ser-315). Over residues Ser-365 to Thr-383 the composition is skewed to polar residues. The segment covering Val-384–Val-398 has biased composition (low complexity). Over residues Pro-477 to Tyr-489 the composition is skewed to polar residues. A compositionally biased stretch (low complexity) spans Ser-490–Ser-506. Phosphothreonine occurs at positions 609 and 614. At Ser-616 the chain carries Phosphoserine. Glycyl lysine isopeptide (Lys-Gly) (interchain with G-Cter in SUMO2) cross-links involve residues Lys-691 and Lys-732. The short motif at Lys-691–Val-720 is the HD1 element. Phosphoserine is present on residues Ser-761 and Ser-762. The FCS-type zinc-finger motif lies at Glu-776–Lys-810. 4 residues coordinate Zn(2+): Cys-785, Cys-788, Cys-804, and Cys-808. Lys-810 is covalently cross-linked (Glycyl lysine isopeptide (Lys-Gly) (interchain with G-Cter in SUMO2)). 2 disordered regions span residues Arg-827–Ala-847 and Glu-864–Glu-889. Residues Trp-919 to Ser-983 enclose the SAM domain.

Component of a PRC1-like complex.

It is found in the nucleus. In terms of biological role, component of a Polycomb group (PcG) multiprotein PRC1-like complex, a complex class required to maintain the transcriptionally repressive state of many genes, including Hox genes, throughout development. PcG PRC1 complex acts via chromatin remodeling and modification of histones; it mediates monoubiquitination of histone H2A 'Lys-119', rendering chromatin heritably changed in its expressibility. In Homo sapiens (Human), this protein is Polyhomeotic-like protein 3 (PHC3).